The sequence spans 462 residues: Cytochrome P450 20A1 (462 aa).

A helical membrane pass occupies residues 4–24 (FAIFAVTFLLALVGAVLYLYP). Cys409 is a binding site for heme.

Belongs to the cytochrome P450 family. Heme serves as cofactor.

The protein resides in the membrane. In Rattus norvegicus (Rat), this protein is Cytochrome P450 20A1 (Cyp20a1).